The chain runs to 607 residues: Rap1 GTPase-GDP dissociation stimulator 1-B (607 aa).

ARM repeat units follow at residues 79-118, 170-211, 347-390, 391-431, and 479-519; these read ELMR…NICY, DSLQ…NLAE, DGNC…NLAI, PVVN…MLID, and SKDV…LIAA.

Interacts with ralB. Probably interacts with the post-translationally isoprenylated (geranyl-geranylation) forms of ral proteins. Interacts with both GDP-bound and GTP-bound forms of ralA, but interaction is much stronger with ralA-GDP.

It is found in the cytoplasm. Its subcellular location is the cytosol. The protein resides in the endoplasmic reticulum. The protein localises to the mitochondrion. Stimulates GDP/GTP exchange reaction of a group of small GTP-binding proteins (G proteins) including Rap1a/Rap1b, RhoA, RhoB and KRas, by stimulating the dissociation of GDP from and the subsequent binding of GTP to each small G protein. This chain is Rap1 GTPase-GDP dissociation stimulator 1-B (rap1gds1-b), found in Xenopus laevis (African clawed frog).